Reading from the N-terminus, the 954-residue chain is Glycine dehydrogenase (decarboxylating) (954 aa).

The segment covering 1 to 13 has biased composition (polar residues); it reads MTELLQSLSTQNE. Residues 1–24 are disordered; that stretch reads MTELLQSLSTQNEFVARHNGPNKS. The residue at position 704 (K704) is an N6-(pyridoxal phosphate)lysine.

This sequence belongs to the GcvP family. The glycine cleavage system is composed of four proteins: P, T, L and H. Requires pyridoxal 5'-phosphate as cofactor.

It catalyses the reaction N(6)-[(R)-lipoyl]-L-lysyl-[glycine-cleavage complex H protein] + glycine + H(+) = N(6)-[(R)-S(8)-aminomethyldihydrolipoyl]-L-lysyl-[glycine-cleavage complex H protein] + CO2. Its function is as follows. The glycine cleavage system catalyzes the degradation of glycine. The P protein binds the alpha-amino group of glycine through its pyridoxal phosphate cofactor; CO(2) is released and the remaining methylamine moiety is then transferred to the lipoamide cofactor of the H protein. The sequence is that of Glycine dehydrogenase (decarboxylating) from Vibrio campbellii (strain ATCC BAA-1116).